Consider the following 224-residue polypeptide: Proteasome subunit beta (224 aa).

A propeptide spans 1-6 (MDVMKG) (removed in mature form; by autocatalysis). Residue Thr7 is the Nucleophile of the active site.

Belongs to the peptidase T1B family. As to quaternary structure, the 20S proteasome core is composed of 14 alpha and 14 beta subunits that assemble into four stacked heptameric rings, resulting in a barrel-shaped structure. The two inner rings, each composed of seven catalytic beta subunits, are sandwiched by two outer rings, each composed of seven alpha subunits. The catalytic chamber with the active sites is on the inside of the barrel. Has a gated structure, the ends of the cylinder being occluded by the N-termini of the alpha-subunits. Is capped at one or both ends by the proteasome regulatory ATPase, PAN.

It localises to the cytoplasm. It carries out the reaction Cleavage of peptide bonds with very broad specificity.. With respect to regulation, the formation of the proteasomal ATPase PAN-20S proteasome complex, via the docking of the C-termini of PAN into the intersubunit pockets in the alpha-rings, triggers opening of the gate for substrate entry. Interconversion between the open-gate and close-gate conformations leads to a dynamic regulation of the 20S proteasome proteolysis activity. Functionally, component of the proteasome core, a large protease complex with broad specificity involved in protein degradation. The M.jannaschii proteasome is able to cleave oligopeptides after Glu, Asp, Tyr, Phe, Trp, slightly after Arg, but not after Ala. Thus, displays caspase-like and chymotrypsin-like activities and low level of trypsin-like activity. This Methanocaldococcus jannaschii (strain ATCC 43067 / DSM 2661 / JAL-1 / JCM 10045 / NBRC 100440) (Methanococcus jannaschii) protein is Proteasome subunit beta.